The following is a 554-amino-acid chain: Glutamine--tRNA ligase (554 aa).

The 'HIGH' region signature appears at 33–43 (PEPNGYLHIGH). ATP contacts are provided by residues 34-36 (EPN) and 40-46 (HIGHAKS). L-glutamine is bound by residues D66 and Y210. Residues T229, 259-260 (RL), and 267-269 (MSK) each bind ATP. The 'KMSKS' region signature appears at 266-270 (VMSKR).

Belongs to the class-I aminoacyl-tRNA synthetase family. Monomer.

The protein resides in the cytoplasm. The catalysed reaction is tRNA(Gln) + L-glutamine + ATP = L-glutaminyl-tRNA(Gln) + AMP + diphosphate. The polypeptide is Glutamine--tRNA ligase (Clostridioides difficile (strain 630) (Peptoclostridium difficile)).